The sequence spans 309 residues: Ras-like protein 1 (309 aa).

Residues 20–25 (GVGKSA), 36–42 (VDEYDPT), 66–67 (AG), 123–126 (NKLD), and 153–155 (SAK) each bind GTP. The short motif at 39–47 (YDPTIEDSY) is the Effector region element. The tract at residues 177 to 303 (KYNSMNRQLD…SANARKESSG (127 aa)) is disordered. 2 stretches are compositionally biased toward polar residues: residues 179-188 (NSMNRQLDNT) and 209-235 (NGSY…NHNG). Over residues 236-245 (ETTKRTDEKN) the composition is skewed to basic and acidic residues. Residues 246 to 256 (YVNQNNNNEGN) show a composition bias toward low complexity. Over residues 257–296 (TKYSSNGNGNRSDISRGNQNNALNSRSKQSAEPQKNSSAN) the composition is skewed to polar residues. Cysteine 305 carries the S-palmitoyl cysteine lipid modification. The residue at position 306 (cysteine 306) is a Cysteine methyl ester. Cysteine 306 carries S-farnesyl cysteine lipidation. Residues 307 to 309 (IIC) constitute a propeptide, removed in mature form.

This sequence belongs to the small GTPase superfamily. Ras family. Farnesylated by RAM1-RAM2, which is required for targeting RAS1 to the cytoplasmic site of the endoplasmic reticulum, where proteolytic processing of the C-terminus by RCE1 and methylation of the resulting carboxyl group by STE14 occurs. Post-translationally, palmitoylated by the ERF2-SHR5 complex, which is required for proper plasma membrane localization of RAS1.

It localises to the cell membrane. The enzyme catalyses GTP + H2O = GDP + phosphate + H(+). Its activity is regulated as follows. Alternates between an inactive form bound to GDP and an active form bound to GTP. Activated by guanine nucleotide-exchange factor (GEF) CDC25 and inactivated by GTPase-activating proteins (GAPs) IRA1 and IRA2. The S.cerevisiae Ras proteins modulate the activity of the adenylate cyclase catalytic subunit and therefore affect the biosynthesis of cyclic-AMP. The polypeptide is Ras-like protein 1 (RAS1) (Saccharomyces cerevisiae (strain ATCC 204508 / S288c) (Baker's yeast)).